A 388-amino-acid chain; its full sequence is Succinate--CoA ligase [ADP-forming] subunit beta (388 aa).

One can recognise an ATP-grasp domain in the interval 9 to 244; that stretch reads KQLFAEYGLP…PSQEDEREAH (236 aa). ATP contacts are provided by residues Lys-46, 53-55, Glu-99, Thr-102, and Glu-107; that span reads GRG. Residues Asn-199 and Asp-213 each coordinate Mg(2+). Residues Asn-264 and 321-323 each bind substrate; that span reads GIV.

This sequence belongs to the succinate/malate CoA ligase beta subunit family. In terms of assembly, heterotetramer of two alpha and two beta subunits. Mg(2+) serves as cofactor.

It carries out the reaction succinate + ATP + CoA = succinyl-CoA + ADP + phosphate. The catalysed reaction is GTP + succinate + CoA = succinyl-CoA + GDP + phosphate. Its pathway is carbohydrate metabolism; tricarboxylic acid cycle; succinate from succinyl-CoA (ligase route): step 1/1. Its function is as follows. Succinyl-CoA synthetase functions in the citric acid cycle (TCA), coupling the hydrolysis of succinyl-CoA to the synthesis of either ATP or GTP and thus represents the only step of substrate-level phosphorylation in the TCA. The beta subunit provides nucleotide specificity of the enzyme and binds the substrate succinate, while the binding sites for coenzyme A and phosphate are found in the alpha subunit. This Marinomonas sp. (strain MWYL1) protein is Succinate--CoA ligase [ADP-forming] subunit beta.